The following is a 175-amino-acid chain: Translation initiation factor IF-3, chloroplastic (175 aa).

This sequence belongs to the IF-3 family. In terms of assembly, monomer.

It localises to the plastid. It is found in the chloroplast. IF-3 binds to the 30S ribosomal subunit and shifts the equilibrium between 70S ribosomes and their 50S and 30S subunits in favor of the free subunits, thus enhancing the availability of 30S subunits on which protein synthesis initiation begins. The protein is Translation initiation factor IF-3, chloroplastic of Cyanidioschyzon merolae (strain NIES-3377 / 10D) (Unicellular red alga).